Consider the following 83-residue polypeptide: DNA-directed RNA polymerase subunit Rpo5 (83 aa).

The protein belongs to the archaeal Rpo5/eukaryotic RPB5 RNA polymerase subunit family. As to quaternary structure, part of the RNA polymerase complex.

It localises to the cytoplasm. The catalysed reaction is RNA(n) + a ribonucleoside 5'-triphosphate = RNA(n+1) + diphosphate. DNA-dependent RNA polymerase (RNAP) catalyzes the transcription of DNA into RNA using the four ribonucleoside triphosphates as substrates. The chain is DNA-directed RNA polymerase subunit Rpo5 from Metallosphaera sedula (strain ATCC 51363 / DSM 5348 / JCM 9185 / NBRC 15509 / TH2).